Reading from the N-terminus, the 147-residue chain is Hemoglobin subunit delta (147 aa).

In terms of domain architecture, Globin spans 3 to 147 (HLTGEEKAAV…VANALAHKYH (145 aa)). Residues His64 and His93 each coordinate heme b.

Belongs to the globin family. As to quaternary structure, heterotetramer of two delta chains and two alpha chains. In terms of tissue distribution, red blood cells.

The protein is Hemoglobin subunit delta (HBD) of Ailuropoda melanoleuca (Giant panda).